Consider the following 377-residue polypeptide: DNA replication and repair protein RecF (377 aa).

30-37 (GLNGSGKT) lines the ATP pocket.

Belongs to the RecF family.

The protein resides in the cytoplasm. Its function is as follows. The RecF protein is involved in DNA metabolism; it is required for DNA replication and normal SOS inducibility. RecF binds preferentially to single-stranded, linear DNA. It also seems to bind ATP. The chain is DNA replication and repair protein RecF from Cytophaga hutchinsonii (strain ATCC 33406 / DSM 1761 / CIP 103989 / NBRC 15051 / NCIMB 9469 / D465).